We begin with the raw amino-acid sequence, 174 residues long: Gamma-crystallin D (174 aa).

Beta/gamma crystallin 'Greek key' domains are found at residues 2–40 (GKITLYEDRGFQGRHYECSSDHPNLQPYLSRCNSARVDS) and 41–83 (GCWM…RLIP). The segment at 84–87 (HSGS) is connecting peptide. Beta/gamma crystallin 'Greek key' domains follow at residues 88 to 128 (HRIR…NVLE) and 129 to 171 (GSWV…RRVI).

The protein belongs to the beta/gamma-crystallin family. As to quaternary structure, monomer.

In terms of biological role, crystallins are the dominant structural components of the vertebrate eye lens. The polypeptide is Gamma-crystallin D (CRYGD) (Homo sapiens (Human)).